The primary structure comprises 480 residues: Cysteine--tRNA ligase (480 aa).

Cysteine 29 serves as a coordination point for Zn(2+). Residues 31 to 41 carry the 'HIGH' region motif; sequence ITVYDYCHLGH. Cysteine 215, histidine 240, and glutamate 244 together coordinate Zn(2+). A 'KMSKS' region motif is present at residues 272–276; the sequence is KMSKS. Lysine 275 lines the ATP pocket.

It belongs to the class-I aminoacyl-tRNA synthetase family. As to quaternary structure, monomer. The cofactor is Zn(2+).

It is found in the cytoplasm. It carries out the reaction tRNA(Cys) + L-cysteine + ATP = L-cysteinyl-tRNA(Cys) + AMP + diphosphate. This chain is Cysteine--tRNA ligase, found in Microcystis aeruginosa (strain NIES-843 / IAM M-2473).